Consider the following 129-residue polypeptide: NADH-quinone oxidoreductase subunit A (129 aa).

The next 3 membrane-spanning stretches (helical) occupy residues 14–34 (LAIH…VAAW), 67–87 (FLIA…FAWA), and 95–115 (WLGL…LVYL).

It belongs to the complex I subunit 3 family. NDH-1 is composed of 14 different subunits. Subunits NuoA, H, J, K, L, M, N constitute the membrane sector of the complex.

The protein resides in the cell inner membrane. The enzyme catalyses a quinone + NADH + 5 H(+)(in) = a quinol + NAD(+) + 4 H(+)(out). In terms of biological role, NDH-1 shuttles electrons from NADH, via FMN and iron-sulfur (Fe-S) centers, to quinones in the respiratory chain. The immediate electron acceptor for the enzyme in this species is believed to be ubiquinone. Couples the redox reaction to proton translocation (for every two electrons transferred, four hydrogen ions are translocated across the cytoplasmic membrane), and thus conserves the redox energy in a proton gradient. The sequence is that of NADH-quinone oxidoreductase subunit A from Rhodopseudomonas palustris (strain BisB5).